The sequence spans 158 residues: Frataxin homolog, mitochondrial (158 aa).

Belongs to the frataxin family. In terms of assembly, monomer. Oligomer.

It localises to the mitochondrion. It carries out the reaction 4 Fe(2+) + O2 + 4 H(+) = 4 Fe(3+) + 2 H2O. In terms of biological role, promotes the biosynthesis of heme as well as the assembly and repair of iron-sulfur clusters by delivering Fe(2+) to proteins involved in these pathways. May play a role in the protection against iron-catalyzed oxidative stress through its ability to catalyze the oxidation of Fe(2+) to Fe(3+). May be able to store large amounts of the metal in the form of a ferrihydrite mineral by oligomerization. The sequence is that of Frataxin homolog, mitochondrial from Schizosaccharomyces pombe (strain 972 / ATCC 24843) (Fission yeast).